Here is a 311-residue protein sequence, read N- to C-terminus: Energy-coupling factor transporter ATP-binding protein EcfA2 (311 aa).

Residues 3-265 (IKLKDVKFTF…IAFLEENNLQ (263 aa)) enclose the ABC transporter domain. 40–47 (GQTGSGKT) is a binding site for ATP.

The protein belongs to the ABC transporter superfamily. Energy-coupling factor EcfA family. In terms of assembly, forms a stable energy-coupling factor (ECF) transporter complex composed of 2 membrane-embedded substrate-binding proteins (S component), 2 ATP-binding proteins (A component) and 2 transmembrane proteins (T component).

The protein resides in the cell membrane. Its function is as follows. ATP-binding (A) component of a common energy-coupling factor (ECF) ABC-transporter complex. Unlike classic ABC transporters this ECF transporter provides the energy necessary to transport a number of different substrates. The sequence is that of Energy-coupling factor transporter ATP-binding protein EcfA2 from Mycoplasmopsis synoviae (strain 53) (Mycoplasma synoviae).